The primary structure comprises 1387 residues: Kinesin-like protein KIF15 (1387 aa).

The tract at residues Met1–Glu23 is disordered. A compositionally biased stretch (polar residues) spans Arg10–Asn22. Residues Ala26 to Ile363 enclose the Kinesin motor domain. Gly109–Thr116 lines the ATP pocket. A coiled-coil region spans residues Val368–Met1132. A Phosphoserine modification is found at Ser568. Residue Lys1009 is modified to N6-acetyllysine. Ser1141 and Ser1169 each carry phosphoserine.

This sequence belongs to the TRAFAC class myosin-kinesin ATPase superfamily. Kinesin family. KLP2 subfamily. Interacts with MKI67 and TPX2. Expressed in brain (neurons in the external germinal layer of the cerebellum and in ventricular zones) (at protein level). Expressed in spleen and testis.

It localises to the cytoplasm. The protein resides in the cytoskeleton. Its subcellular location is the spindle. Plus-end directed kinesin-like motor enzyme involved in mitotic spindle assembly. The chain is Kinesin-like protein KIF15 (Kif15) from Mus musculus (Mouse).